The following is a 148-amino-acid chain: Large ribosomal subunit protein uL15 (148 aa).

Positions 1–51 are disordered; sequence MNLSNLKPAEGSTKTRKRIGRGAGSGLGGTSTRGHKGAKSRSGYSKKVGFE. Gly residues predominate over residues 21-31; sequence RGAGSGLGGTS.

The protein belongs to the universal ribosomal protein uL15 family. Part of the 50S ribosomal subunit.

Its function is as follows. Binds to the 23S rRNA. The sequence is that of Large ribosomal subunit protein uL15 from Bacteroides thetaiotaomicron (strain ATCC 29148 / DSM 2079 / JCM 5827 / CCUG 10774 / NCTC 10582 / VPI-5482 / E50).